The chain runs to 350 residues: MGVTELGKLIPDNLRRRVSLEQLNGKLIALDAYNALYQFLASIRQPDGTPLMDSQGRVTSHLSGLLYRTINLLEYGIKPVYVFDGKPPELKLIEIEKRRRVREKAVEDWIKAVEEGKKSEARKYAQRALFITSDMVDEAKRLLDSMGVPWVQAPSEGEAQAAYMASKGIVWAAGSQDYDSFLFGAPRLVRNLTISGRRKLPGRDEYVEVTPELIELNDVLKALRLRDRGQLIDLAILLGTDYNPEGIPGIGPQRALRLIQEYGSLDKLMNTVLKNAQFPVDPFKIREFFLNPPVTQEVNVKFKEPNEDEVVRLLVEEHDFSQDRVKNALERLRKSMGKAKGSTTLDSFFG.

Residues 1-102 (MGVTELGKLI…IEIEKRRRVR (102 aa)) are N-domain. Mg(2+) contacts are provided by aspartate 31, aspartate 84, glutamate 156, glutamate 158, aspartate 177, aspartate 179, and aspartate 241. The I-domain stretch occupies residues 120–263 (EARKYAQRAL…RALRLIQEYG (144 aa)).

The protein belongs to the XPG/RAD2 endonuclease family. FEN1 subfamily. As to quaternary structure, interacts with PCNA. PCNA stimulates the nuclease activity without altering cleavage specificity. It depends on Mg(2+) as a cofactor.

Functionally, structure-specific nuclease with 5'-flap endonuclease and 5'-3' exonuclease activities involved in DNA replication and repair. During DNA replication, cleaves the 5'-overhanging flap structure that is generated by displacement synthesis when DNA polymerase encounters the 5'-end of a downstream Okazaki fragment. Binds the unpaired 3'-DNA end and kinks the DNA to facilitate 5' cleavage specificity. Cleaves one nucleotide into the double-stranded DNA from the junction in flap DNA, leaving a nick for ligation. Also involved in the base excision repair (BER) pathway. Acts as a genome stabilization factor that prevents flaps from equilibrating into structures that lead to duplications and deletions. Also possesses 5'-3' exonuclease activity on nicked or gapped double-stranded DNA. In Caldivirga maquilingensis (strain ATCC 700844 / DSM 13496 / JCM 10307 / IC-167), this protein is Flap endonuclease 1.